We begin with the raw amino-acid sequence, 1382 residues long: Hepatocyte growth factor receptor (1382 aa).

A signal peptide spans 1 to 24 (MKAPAVLAPGILVLLFTLVQKSYG). Over 25-933 (ECREALVKSE…VIVQPDQNFT (909 aa)) the chain is Extracellular. Positions 27 to 516 (REALVKSEMN…TGKKITKIPL (490 aa)) constitute a Sema domain. Residue asparagine 45 is glycosylated (N-linked (GlcNAc...) asparagine). Disulfide bonds link cysteine 95-cysteine 101, cysteine 98-cysteine 160, cysteine 133-cysteine 141, and cysteine 173-cysteine 176. Asparagine 106 carries an N-linked (GlcNAc...) asparagine glycan. N-linked (GlcNAc...) asparagine glycans are attached at residues asparagine 203 and asparagine 359. 2 disulfide bridges follow: cysteine 299–cysteine 364 and cysteine 386–cysteine 398. Residues asparagine 400 and asparagine 406 are each glycosylated (N-linked (GlcNAc...) asparagine). Cystine bridges form between cysteine 521-cysteine 539, cysteine 527-cysteine 562, cysteine 530-cysteine 546, and cysteine 542-cysteine 552. IPT/TIG domains are found at residues 564–656 (PTIY…FSYV), 658–740 (PVIT…FSYQ), and 743–837 (PIVY…LIYV). O-linked (Man) threonine glycosylation is present at threonine 583. Residues asparagine 608 and asparagine 636 are each glycosylated (N-linked (GlcNAc...) asparagine). O-linked (Man) threonine glycosylation is found at threonine 677 and threonine 762. N-linked (GlcNAc...) asparagine glycans are attached at residues asparagine 786, asparagine 880, and asparagine 931. The helical transmembrane segment at 934–956 (GLIVGVISISIILLLLLGVFLWL) threads the bilayer. At 957 to 1382 (KKRKQIKDLG…QDNIDGEGDT (426 aa)) the chain is on the cytoplasmic side. A Phosphoserine modification is found at serine 967. Threonine 978 is modified (phosphothreonine). Phosphoserine is present on residues serine 991, serine 998, and serine 1001. At tyrosine 1004 the chain carries Phosphotyrosine. A Protein kinase domain is found at 1079–1346 (VHFNEVIGRG…RISAIFSTFI (268 aa)). ATP is bound by residues 1085-1093 (IGRGHFGCV) and lysine 1111. Aspartate 1205 (proton acceptor) is an active-site residue. The segment at 1213 to 1382 (LDEKFTVKVA…QDNIDGEGDT (170 aa)) is interaction with RANBP9. Phosphotyrosine is present on tyrosine 1231. A phosphotyrosine; by autocatalysis mark is found at tyrosine 1235 and tyrosine 1236. Residue threonine 1290 is modified to Phosphothreonine. The tract at residues 1321 to 1360 (WHPKAELRPSFSELVSRISAIFSTFIGEHYVHVNATYVNV) is interaction with MUC20. Phosphotyrosine; by autocatalysis occurs at positions 1350 and 1357. Tyrosine 1366 is subject to Phosphotyrosine.

This sequence belongs to the protein kinase superfamily. Tyr protein kinase family. In terms of assembly, heterodimer made of an alpha chain (50 kDa) and a beta chain (145 kDa) which are disulfide linked. Binds PLXNB1. Interacts when phosphorylated with downstream effectors including STAT3, PIK3R1, SRC, PCLG1, GRB2 and GAB1. Interacts with SPSB1, SPSB2 and SPSB4. Interacts with INPP5D/SHIP1. When phosphorylated at Tyr-1357, interacts with INPPL1/SHIP2. Interacts with RANBP9 and RANBP10, as well as SPSB1, SPSB2, SPSB3 and SPSB4. SPSB1 binding occurs in the presence and in the absence of HGF, however HGF treatment has a positive effect on this interaction. Interacts with MUC20; prevents interaction with GRB2 and suppresses hepatocyte growth factor-induced cell proliferation. Interacts with GRB10. Interacts with PTPN1 and PTPN2. Interacts with HSP90AA1 and HSP90AB1; the interaction suppresses MET kinase activity. Interacts with tensin TNS3. Interacts (when phosphorylated) with tensin TNS4 (via SH2 domain); the interaction increases MET protein stability by inhibiting MET endocytosis and subsequent lysosomal degradation. Autophosphorylated in response to ligand binding on Tyr-1235 and Tyr-1236 in the kinase domain leading to further phosphorylation of Tyr-1350 and Tyr-1357 in the C-terminal multifunctional docking site. Dephosphorylated by PTPRJ at Tyr-1350 and Tyr-1366. Dephosphorylated by PTPN1 and PTPN2. In terms of processing, ubiquitinated. Ubiquitination by CBL regulates the receptor stability and activity through proteasomal degradation. Post-translationally, O-mannosylation of IPT/TIG domains by TMEM260 is required for protein maturation. O-mannosylated residues are composed of single mannose glycans that are not elongated or modified.

The protein localises to the membrane. The enzyme catalyses L-tyrosyl-[protein] + ATP = O-phospho-L-tyrosyl-[protein] + ADP + H(+). Its activity is regulated as follows. In its inactive state, the C-terminal tail interacts with the catalytic domain and inhibits the kinase activity. Upon ligand binding, the C-terminal tail is displaced and becomes phosphorylated, thus increasing the kinase activity. Functionally, receptor tyrosine kinase that transduces signals from the extracellular matrix into the cytoplasm by binding to hepatocyte growth factor/HGF ligand. Regulates many physiological processes including proliferation, scattering, morphogenesis and survival. Ligand binding at the cell surface induces autophosphorylation of MET on its intracellular domain that provides docking sites for downstream signaling molecules. Following activation by ligand, interacts with the PI3-kinase subunit PIK3R1, PLCG1, SRC, GRB2, STAT3 or the adapter GAB1. Recruitment of these downstream effectors by MET leads to the activation of several signaling cascades including the RAS-ERK, PI3 kinase-AKT, or PLCgamma-PKC. The RAS-ERK activation is associated with the morphogenetic effects while PI3K/AKT coordinates prosurvival effects. During embryonic development, MET signaling plays a role in gastrulation, development and migration of muscles and neuronal precursors, angiogenesis and kidney formation. In adults, participates in wound healing as well as organ regeneration and tissue remodeling. Also promotes differentiation and proliferation of hematopoietic cells. The polypeptide is Hepatocyte growth factor receptor (MET) (Felis catus (Cat)).